The sequence spans 212 residues: Thymidylate kinase (212 aa).

Residue 11 to 18 (GPEGAGKT) participates in ATP binding.

Belongs to the thymidylate kinase family.

It catalyses the reaction dTMP + ATP = dTDP + ADP. In terms of biological role, phosphorylation of dTMP to form dTDP in both de novo and salvage pathways of dTTP synthesis. The protein is Thymidylate kinase of Streptococcus pneumoniae (strain Taiwan19F-14).